Reading from the N-terminus, the 278-residue chain is Phosphatidylglycerol--prolipoprotein diacylglyceryl transferase (278 aa).

Helical transmembrane passes span 12 to 32, 44 to 64, 86 to 106, and 113 to 133; these read FGPL…LIGL, LENG…VIGA, IWEG…TLIL, and QPFL…QAIG. R134 provides a ligand contact to a 1,2-diacyl-sn-glycero-3-phospho-(1'-sn-glycerol). The next 3 membrane-spanning stretches (helical) occupy residues 173–193, 203–223, and 246–266; these read PTFL…LVLF, FPAG…RIWI, and IAQL…WWLK.

The protein belongs to the Lgt family.

It is found in the cell inner membrane. It catalyses the reaction L-cysteinyl-[prolipoprotein] + a 1,2-diacyl-sn-glycero-3-phospho-(1'-sn-glycerol) = an S-1,2-diacyl-sn-glyceryl-L-cysteinyl-[prolipoprotein] + sn-glycerol 1-phosphate + H(+). It participates in protein modification; lipoprotein biosynthesis (diacylglyceryl transfer). Catalyzes the transfer of the diacylglyceryl group from phosphatidylglycerol to the sulfhydryl group of the N-terminal cysteine of a prolipoprotein, the first step in the formation of mature lipoproteins. In Parasynechococcus marenigrum (strain WH8102), this protein is Phosphatidylglycerol--prolipoprotein diacylglyceryl transferase.